The chain runs to 814 residues: Echinoderm microtubule-associated protein-like 1 (814 aa).

The stretch at 31 to 72 (SMEVSDRIASLEQRVQMQEDDIQLLKSALADVVRRLNITEEQ) forms a coiled coil. The disordered stretch occupies residues 77–180 (NRKGPTKARP…ESKPKEPAFS (104 aa)). Residues 92–101 (PLRTTVNNGT) are compositionally biased toward polar residues. The segment covering 103–115 (LPKKPSASLPAPS) has biased composition (low complexity). Residues 127-137 (KSINRTSSSER) show a composition bias toward polar residues. Residues 142–152 (GRRESSGDSKG) show a composition bias toward basic and acidic residues. Positions 155–167 (NRTGSTSSSSSGK) are enriched in low complexity. The tandem atypical propeller in EMLs stretch occupies residues 175-814 (KEPAFSPEEG…DTSIMQWRVI (640 aa)). WD repeat units lie at residues 260 to 309 (EQLQ…IWDS), 314 to 357 (TLHV…VWDW), 362 to 399 (RLAD…FWTL), 408 to 445 (QGLF…VWGK), 449 to 488 (RISY…SWNG), 492 to 529 (KLHK…LQGT), 534 to 571 (FTPI…LWDA), 577 to 612 (VWDK…VFDT), 616 to 654 (DLVT…IYGV), 663 to 700 (RVGK…YWVP), 708 to 767 (SVET…LFSY), and 774 to 813 (APSH…QWRV).

The protein belongs to the WD repeat EMAP family. As to quaternary structure, homotrimer; self-association is mediated by the N-terminal coiled coil. Does not interact with EML3. Binds unpolymerized tubulins via its WD repeat region. Binds repolymerizing microtubules. Interacts with TASOR. Detected in adult brain cortex, hippocampus and thalamus. Expressed in the stomach, lungs and in Sertoli cells of the testis.

It localises to the cytoplasm. It is found in the perinuclear region. Its subcellular location is the cytoskeleton. In terms of biological role, modulates the assembly and organization of the microtubule cytoskeleton, and probably plays a role in regulating the orientation of the mitotic spindle and the orientation of the plane of cell division. Required for normal proliferation of neuronal progenitor cells in the developing brain and for normal brain development. Does not affect neuron migration per se. In Mus musculus (Mouse), this protein is Echinoderm microtubule-associated protein-like 1 (Eml1).